The chain runs to 276 residues: NADH-cytochrome b5 reductase 2 (276 aa).

Positions 15–127 (EAKYPLPLIE…RGPRGRLFYH (113 aa)) constitute an FAD-binding FR-type domain. N6-acetyllysine is present on K17. Y18 is subject to Phosphotyrosine. Residues 107–137 (ENMK…IRPD) and 146–181 (LADH…RMSL) contribute to the FAD site.

Belongs to the flavoprotein pyridine nucleotide cytochrome reductase family. FAD is required as a cofactor. As to expression, restricted expression.

It carries out the reaction 2 Fe(III)-[cytochrome b5] + NADH = 2 Fe(II)-[cytochrome b5] + NAD(+) + H(+). In terms of biological role, NADH-cytochrome b5 reductases are involved in desaturation and elongation of fatty acids, cholesterol biosynthesis, drug metabolism, and, in erythrocyte, methemoglobin reduction. Responsible for NADH-dependent lucigenin chemiluminescence in spermatozoa by reducing both lucigenin and 2-[4-iodophenyl]-3-[4-nitrophenyl]-5-[2,4-disulfophenyl]-2H tetrazolium monosodium salt (WST-1). This chain is NADH-cytochrome b5 reductase 2, found in Homo sapiens (Human).